A 363-amino-acid polypeptide reads, in one-letter code: NAD(P)H-quinone oxidoreductase subunit 1, chloroplastic (363 aa).

A run of 6 helical transmembrane segments spans residues 27–47 (VWLLIPIFILVLGIVIGVLVI), 104–124 (IAVIAILLSYLVIPFGYHLVL), 127–147 (LSIGVFLWIAISSIAPIGLLM), 248–268 (YSGIKFGLFYVASYLNLLVSS), 300–320 (VFGMTIGIFITLAKAYLFLFI), and 343–363 (FLLPISLGNLLLTTSFQLFSL).

It belongs to the complex I subunit 1 family. NDH is composed of at least 16 different subunits, 5 of which are encoded in the nucleus.

It is found in the plastid. Its subcellular location is the chloroplast thylakoid membrane. The catalysed reaction is a plastoquinone + NADH + (n+1) H(+)(in) = a plastoquinol + NAD(+) + n H(+)(out). It catalyses the reaction a plastoquinone + NADPH + (n+1) H(+)(in) = a plastoquinol + NADP(+) + n H(+)(out). NDH shuttles electrons from NAD(P)H:plastoquinone, via FMN and iron-sulfur (Fe-S) centers, to quinones in the photosynthetic chain and possibly in a chloroplast respiratory chain. The immediate electron acceptor for the enzyme in this species is believed to be plastoquinone. Couples the redox reaction to proton translocation, and thus conserves the redox energy in a proton gradient. The sequence is that of NAD(P)H-quinone oxidoreductase subunit 1, chloroplastic from Ranunculus macranthus (Large buttercup).